A 297-amino-acid polypeptide reads, in one-letter code: Probable endonuclease 4 (297 aa).

Zn(2+) contacts are provided by His-69, His-110, Glu-145, Asp-179, His-182, His-214, Asp-227, His-229, and Glu-259.

This sequence belongs to the AP endonuclease 2 family. The cofactor is Zn(2+).

The enzyme catalyses Endonucleolytic cleavage to 5'-phosphooligonucleotide end-products.. In terms of biological role, endonuclease IV plays a role in DNA repair. It cleaves phosphodiester bonds at apurinic or apyrimidinic (AP) sites, generating a 3'-hydroxyl group and a 5'-terminal sugar phosphate. This Listeria innocua serovar 6a (strain ATCC BAA-680 / CLIP 11262) protein is Probable endonuclease 4.